A 1019-amino-acid polypeptide reads, in one-letter code: UPF0182 protein Krad_1193 (1019 aa).

7 consecutive transmembrane segments (helical) span residues 19–39, 61–81, 115–135, 169–189, 213–233, 264–284, and 291–311; these read GAAL…VVGA, LWLQ…AVAV, RLVV…VAMS, WLAF…IAGL, VHLA…YWLD, AILA…AVGT, and IGTG…PWAV. Disordered stretches follow at residues 897–934 and 977–1019; these read GNSG…ATGD and DAAS…TPTP. Low complexity predominate over residues 977–1005; it reads DAASAAEARLERSGTSGPTSSSSPSASSA. Residues 1006 to 1019 show a composition bias toward pro residues; the sequence is PPVPGETPAATPTP.

The protein belongs to the UPF0182 family.

The protein resides in the cell membrane. This Kineococcus radiotolerans (strain ATCC BAA-149 / DSM 14245 / SRS30216) protein is UPF0182 protein Krad_1193.